The chain runs to 615 residues: MNNLIKSKLELLPTSPGCYIHKDKNGTIIYVGKAKNLRNRVRSYFRGSHDTKTEALVSEIVDFEFIVTESNIEALLLEINLIKENKPKYNIMLKDDKSYPFIKITNERYPRLIITRQVKKDGGLYFGPYPDVGAANEIKRLLDRIFPFRKCTNPPSKVCFYYHIGQCMAHTICKKDEAYFKSMAQEVSDFLKGQDNKIIDELKGKMAAAAQTMEFERAAEYRDLIQAIGTLRTKQRVMAKDLQNRDVFGYYVDKGWMCVQVFFVRQGKLIERDVNLFPYFNDPDEDFLTYVGQFYQEKSHLVPNEVLIPQDIDEEAVKALVDSKILKPQRGEKKQLVNLAIKNARVSLEQKFNLLEKSVEKTQGAIENLGRLLQIPTPVRIESFDNSNIMGTSPVSAMVVFVNGKPSKKDYRKYKIKTVVGPDDYASMREVIRRRYGRVQREALTPPDLIVIDGGQGQVNIAKQVIQEELGLDIPIAGLQKNDKHQTHELLFGDPLEVVDLSRNSQEFFLLQRIQDEVHRFAITFHRQLRSKNSFSSQLDGIDGLGPKRKQNLMRHFKSLTKIKEASVDEIVEVGVPRAVAEAVQTKLNPQETEILLQVAEERVDYQTEGNHNKP.

In terms of domain architecture, GIY-YIG spans 14–91; it reads TSPGCYIHKD…IKENKPKYNI (78 aa). Residues 196–231 form the UVR domain; that stretch reads NKIIDELKGKMAAAAQTMEFERAAEYRDLIQAIGTL.

This sequence belongs to the UvrC family. In terms of assembly, interacts with UvrB in an incision complex.

The protein localises to the cytoplasm. Functionally, the UvrABC repair system catalyzes the recognition and processing of DNA lesions. UvrC both incises the 5' and 3' sides of the lesion. The N-terminal half is responsible for the 3' incision and the C-terminal half is responsible for the 5' incision. The protein is UvrABC system protein C of Streptococcus pneumoniae serotype 19F (strain G54).